We begin with the raw amino-acid sequence, 316 residues long: Protoheme IX farnesyltransferase (316 aa).

The interval 1 to 21 is disordered; the sequence is MAKSQALGNAPLTSTVAENAT. Polar residues predominate over residues 11–21; that stretch reads PLTSTVAENAT. 9 helical membrane passes run 42–62, 67–87, 115–135, 136–156, 163–183, 189–209, 235–255, 256–276, and 295–315; these read VVAMLLLTALVGMCLAVPGIP, VILGLIGIGFQSAAAAAFNHV, VVFASTLMVMGFVILLELNAL, TAWLTMASLVGYAVVYTVWLK, IVIGGIAGAAPPLLGWTAVTG, ALLLVMLVFTWTPPHFWALAI, MVLLYTVMLFIVGLLPWLTGM, SGGVYLVGSSLLNLGFIGYAL, and IWHLLALFVVLLGDHWITSLM.

Belongs to the UbiA prenyltransferase family. Protoheme IX farnesyltransferase subfamily.

The protein resides in the cell inner membrane. The catalysed reaction is heme b + (2E,6E)-farnesyl diphosphate + H2O = Fe(II)-heme o + diphosphate. The protein operates within porphyrin-containing compound metabolism; heme O biosynthesis; heme O from protoheme: step 1/1. Its function is as follows. Converts heme B (protoheme IX) to heme O by substitution of the vinyl group on carbon 2 of heme B porphyrin ring with a hydroxyethyl farnesyl side group. The polypeptide is Protoheme IX farnesyltransferase (Photobacterium profundum (strain SS9)).